Here is a 122-residue protein sequence, read N- to C-terminus: Large ribosomal subunit protein bL12 (122 aa).

This sequence belongs to the bacterial ribosomal protein bL12 family. In terms of assembly, homodimer. Part of the ribosomal stalk of the 50S ribosomal subunit. Forms a multimeric L10(L12)X complex, where L10 forms an elongated spine to which 2 to 4 L12 dimers bind in a sequential fashion. Binds GTP-bound translation factors.

Functionally, forms part of the ribosomal stalk which helps the ribosome interact with GTP-bound translation factors. Is thus essential for accurate translation. In Cronobacter sakazakii (strain ATCC BAA-894) (Enterobacter sakazakii), this protein is Large ribosomal subunit protein bL12.